A 70-amino-acid chain; its full sequence is Large ribosomal subunit protein uL29 (70 aa).

It belongs to the universal ribosomal protein uL29 family.

The polypeptide is Large ribosomal subunit protein uL29 (Prochlorococcus marinus (strain MIT 9211)).